Consider the following 386-residue polypeptide: Succinate--CoA ligase [ADP-forming] subunit beta (386 aa).

The region spanning lysine 9–glutamate 244 is the ATP-grasp domain. ATP-binding positions include lysine 46, glycine 53–glycine 55, glutamate 99, cysteine 102, and glutamate 107. The Mg(2+) site is built by asparagine 199 and aspartate 213. Substrate is bound by residues asparagine 264 and glycine 321–methionine 323.

It belongs to the succinate/malate CoA ligase beta subunit family. Heterotetramer of two alpha and two beta subunits. It depends on Mg(2+) as a cofactor.

The enzyme catalyses succinate + ATP + CoA = succinyl-CoA + ADP + phosphate. The catalysed reaction is GTP + succinate + CoA = succinyl-CoA + GDP + phosphate. Its pathway is carbohydrate metabolism; tricarboxylic acid cycle; succinate from succinyl-CoA (ligase route): step 1/1. Functionally, succinyl-CoA synthetase functions in the citric acid cycle (TCA), coupling the hydrolysis of succinyl-CoA to the synthesis of either ATP or GTP and thus represents the only step of substrate-level phosphorylation in the TCA. The beta subunit provides nucleotide specificity of the enzyme and binds the substrate succinate, while the binding sites for coenzyme A and phosphate are found in the alpha subunit. The protein is Succinate--CoA ligase [ADP-forming] subunit beta of Bacillus mycoides (strain KBAB4) (Bacillus weihenstephanensis).